We begin with the raw amino-acid sequence, 232 residues long: Putative quercetin 2,3-dioxygenase PA1210 (232 aa).

4 residues coordinate a divalent metal cation: His57, His59, His101, and Glu103.

It belongs to the pirin family. It depends on a divalent metal cation as a cofactor.

It catalyses the reaction quercetin + O2 = 2-(3,4-dihydroxybenzoyloxy)-4,6-dihydroxybenzoate + CO. It participates in flavonoid metabolism; quercetin degradation. Functionally, putative quercetin 2,3-dioxygenase. The sequence is that of Putative quercetin 2,3-dioxygenase PA1210 from Pseudomonas aeruginosa (strain ATCC 15692 / DSM 22644 / CIP 104116 / JCM 14847 / LMG 12228 / 1C / PRS 101 / PAO1).